Here is a 490-residue protein sequence, read N- to C-terminus: Alpha-galactosidase (490 aa).

Residue 4-70 (FKIAIIGAGS…LPTRVTATTD (67 aa)) coordinates NAD(+). Substrate is bound at residue Asn-150. Cys-171 contributes to the Mn(2+) binding site. The active-site Proton donor is the His-172. Residue His-201 coordinates Mn(2+). Tyr-258 (proton acceptor) is an active-site residue.

This sequence belongs to the glycosyl hydrolase 4 family. As to quaternary structure, homodimer. The cofactor is Mn(2+). Requires NAD(+) as cofactor.

The enzyme catalyses Hydrolysis of terminal, non-reducing alpha-D-galactose residues in alpha-D-galactosides, including galactose oligosaccharides, galactomannans and galactolipids.. The chain is Alpha-galactosidase (melA) from Rhizobium meliloti (strain 1021) (Ensifer meliloti).